The primary structure comprises 274 residues: Thiamine kinase (274 aa).

The protein belongs to the thiamine kinase family.

It carries out the reaction thiamine + ATP = thiamine phosphate + ADP + H(+). The protein operates within cofactor biosynthesis; thiamine diphosphate biosynthesis; thiamine phosphate from thiamine: step 1/1. Catalyzes the ATP-dependent phosphorylation of thiamine to thiamine phosphate. Is involved in thiamine salvage. The polypeptide is Thiamine kinase (Salmonella paratyphi A (strain ATCC 9150 / SARB42)).